Here is a 237-residue protein sequence, read N- to C-terminus: Ras-related protein Rab-33A (237 aa).

GTP contacts are provided by asparagine 46, valine 47, glycine 48, lysine 49, threonine 50, cysteine 51, threonine 65, and threonine 68. Threonine 50 is a binding site for Mg(2+). A Switch 1 motif is present at residues 59 to 71 (GTFPDKTEATIGV). Mg(2+) contacts are provided by threonine 68 and aspartate 91. The Switch 2 motif lies at 92-111 (TAGQERFRKSMVEHYYRNVH). GTP-binding residues include glycine 94, asparagine 151, lysine 152, aspartate 154, alanine 182, and lysine 183. Residues cysteine 235 and cysteine 237 are each lipidated (S-geranylgeranyl cysteine). Residue cysteine 237 is modified to Cysteine methyl ester.

It belongs to the small GTPase superfamily. Rab family. Interacts with ATG16L1; the interaction is important for autophagosome formation. Mg(2+) is required as a cofactor. As to expression, expressed predominantly in brain. Weak expression in ovary.

The protein resides in the cell membrane. It catalyses the reaction GTP + H2O = GDP + phosphate + H(+). With respect to regulation, regulated by guanine nucleotide exchange factors (GEFs) which promote the exchange of bound GDP for free GTP. Regulated by GTPase activating proteins (GAPs) which increase the GTP hydrolysis activity. Inhibited by GDP dissociation inhibitors (GDIs). Its function is as follows. The small GTPases Rab are key regulators of intracellular membrane trafficking, from the formation of transport vesicles to their fusion with membranes. Rabs cycle between an inactive GDP-bound form and an active GTP-bound form that is able to recruit to membranes different sets of downstream effectors directly responsible for vesicle formation, movement, tethering and fusion. Modulates autophagosome formation through interaction with ATG16L1. The sequence is that of Ras-related protein Rab-33A from Mus musculus (Mouse).